The chain runs to 526 residues: Catalase (526 aa).

The segment covering 1–22 has biased composition (basic and acidic residues); sequence MADDREKSTDQMKLWKEGRGSQ. Positions 1 to 29 are disordered; that stretch reads MADDREKSTDQMKLWKEGRGSQRPDVLTT. Active-site residues include His75 and Asn148. The NADP(+) site is built by His194, Ser201, Arg203, Asn213, Lys237, Trp303, His305, and Lys306. Residue Tyr358 coordinates heme.

Belongs to the catalase family. As to quaternary structure, homotetramer. Requires heme as cofactor. It depends on NADP(+) as a cofactor.

Its subcellular location is the peroxisome matrix. The enzyme catalyses 2 H2O2 = O2 + 2 H2O. Catalyzes the degradation of hydrogen peroxide (H(2)O(2)) generated by peroxisomal oxidases to water and oxygen, thereby protecting cells from the toxic effects of hydrogen peroxide. This is Catalase (cat) from Danio rerio (Zebrafish).